A 245-amino-acid polypeptide reads, in one-letter code: MEEPLTVAAIFRGPFNILAISEVLKVVAAVGWSVNYIGMVHRAWKDQIPSIGILPLCCDIGWEFVYAWMFPDFSSHWQGVVRVWFFLHSAVLLVTLKVSPNDWANTPLAHRHIVFIYIFVTIVFGAGQYALAAEIGPALGFHWGGALCQFLSSSGGIAQLLSRGHTRGASYLIWFARAISTFAGFIKLCIRFQHNVDGAPWLDSPMCWFYIVTVLSFDAAYPFLYFSMRKFETPAPQREARIKKQ.

7 consecutive transmembrane segments (helical) span residues 17–37, 51–71, 76–96, 113–133, 138–158, 170–190, and 206–226; these read ILAI…VNYI, IGIL…WMFP, HWQG…LVTL, IVFI…ALAA, ALGF…GGIA, SYLI…KLCI, and MCWF…FLYF.

This sequence belongs to the paxB family.

The protein localises to the membrane. The protein operates within secondary metabolite biosynthesis; terpenoid biosynthesis. Its function is as follows. Terpene cyclase; part of the gene cluster A that mediates the biosynthesis of the fungal meroterpenoid acetoxydehydroaustin. The first step of the pathway is the synthesis of 3,5-dimethylorsellinic acid by the polyketide synthase ausA. 3,5-dimethylorsellinic acid is then prenylated by the polyprenyl transferase ausN. Further epoxidation by the FAD-dependent monooxygenase ausM and cyclization by the probable terpene cyclase ausL lead to the formation of protoaustinoid A. Protoaustinoid A is then oxidized to spiro-lactone preaustinoid A3 by the combined action of the FAD-binding monooxygenases ausB and ausC, and the dioxygenase ausE. Acid-catalyzed keto-rearrangement and ring contraction of the tetraketide portion of preaustinoid A3 by ausJ lead to the formation of preaustinoid A4. The aldo-keto reductase ausK, with the help of ausH, is involved in the next step by transforming preaustinoid A4 into isoaustinone which is in turn hydroxylated by the P450 monooxygenase ausI to form austinolide. The cytochrome P450 monooxygenase ausG then modifies austinolide to austinol. Austinol is further acetylated to austin by the O-acetyltransferase ausP, which spontaneously changes to dehydroaustin. The cytochrome P450 monooxygenase then converts dehydroaustin is into 7-dehydrodehydroaustin. The hydroxylation catalyzed by ausR permits the second O-acetyltransferase ausQ to add an additional acetyl group to the molecule, leading to the formation of acetoxydehydroaustin. Due to genetic rearrangements of the clusters and the subsequent loss of some enzymes, the end product of the Penicillium brasilianum austinoid biosynthesis clusters is acetoxydehydroaustin. This chain is Terpene cyclase ausL, found in Penicillium brasilianum.